The primary structure comprises 153 residues: Late embryogenesis abundant protein B19.4 (153 aa).

The segment at 1–153 (MASGQQERSE…IDESKFKTKS (153 aa)) is disordered. Composition is skewed to basic and acidic residues over residues 7 to 19 (ERSELDRMAREGE), 32 to 122 (EAQE…EMGR), and 133 to 153 (GGERAAREGIDIDESKFKTKS). 4 consecutive repeat copies span residues 43–62 (RGGQTRKEQLGEEGYREMGH), 63–82 (KGGETRKEQLGEEGYREMGH), 83–102 (KGGETRKEQLGEEGYREMGH), and 103–122 (KGGETRKEQMGEEGYREMGR). The interval 43 to 122 (RGGQTRKEQL…GEEGYREMGR (80 aa)) is 4 X 20 AA tandem repeats.

This sequence belongs to the small hydrophilic plant seed protein family.

Lea proteins are late embryonic proteins abundant in higher plant seed embryos. The protein is Late embryogenesis abundant protein B19.4 (B19.4) of Hordeum vulgare (Barley).